The chain runs to 438 residues: AP-2 complex subunit mu (438 aa).

The 261-residue stretch at 177 to 437 (KNEVFLDIVE…ITKAGSYEIR (261 aa)) folds into the MHD domain.

This sequence belongs to the adaptor complexes medium subunit family. Adaptor protein complex 2 (AP-2) is a heterotetramer composed of two large adaptins (alpha-type and beta-type subunits), a medium adaptin (mu-type subunit) and a small adaptin (sigma-type subunit).

It localises to the cell membrane. The protein resides in the membrane. The protein localises to the coated pit. It is found in the golgi apparatus. Its subcellular location is the trans-Golgi network membrane. Subunit of the adaptor protein complex 2 (AP-2). Adaptor protein complexes function in protein transport via transport vesicles in different membrane traffic pathways. Adaptor protein complexes are vesicle coat components and appear to be involved in cargo selection and vesicle formation. AP-2 is involved in clathrin-dependent endocytosis in which cargo proteins are incorporated into vesicles surrounded by clathrin (clathrin-coated vesicles, CCVs) which are destined for fusion with the early endosome. AP-2 recognizes Y-X-X-Phi endocytosis signal motif within the cytosolic tails of transmembrane cargo molecules. The complex binds polyphosphoinositides. The polypeptide is AP-2 complex subunit mu (AP2M) (Arabidopsis thaliana (Mouse-ear cress)).